The chain runs to 321 residues: Lipoyl synthase (321 aa).

Cys-68, Cys-73, Cys-79, Cys-94, Cys-98, Cys-101, and Ser-308 together coordinate [4Fe-4S] cluster. The 218-residue stretch at 80-297 (FNHGTATFMI…KAEALAMGFT (218 aa)) folds into the Radical SAM core domain.

This sequence belongs to the radical SAM superfamily. Lipoyl synthase family. [4Fe-4S] cluster is required as a cofactor.

It is found in the cytoplasm. The enzyme catalyses [[Fe-S] cluster scaffold protein carrying a second [4Fe-4S](2+) cluster] + N(6)-octanoyl-L-lysyl-[protein] + 2 oxidized [2Fe-2S]-[ferredoxin] + 2 S-adenosyl-L-methionine + 4 H(+) = [[Fe-S] cluster scaffold protein] + N(6)-[(R)-dihydrolipoyl]-L-lysyl-[protein] + 4 Fe(3+) + 2 hydrogen sulfide + 2 5'-deoxyadenosine + 2 L-methionine + 2 reduced [2Fe-2S]-[ferredoxin]. The protein operates within protein modification; protein lipoylation via endogenous pathway; protein N(6)-(lipoyl)lysine from octanoyl-[acyl-carrier-protein]: step 2/2. Its function is as follows. Catalyzes the radical-mediated insertion of two sulfur atoms into the C-6 and C-8 positions of the octanoyl moiety bound to the lipoyl domains of lipoate-dependent enzymes, thereby converting the octanoylated domains into lipoylated derivatives. The protein is Lipoyl synthase of Salmonella paratyphi A (strain AKU_12601).